The primary structure comprises 277 residues: Phosphate import ATP-binding protein PstB (277 aa).

In terms of domain architecture, ABC transporter spans 31 to 272; it reads LEVPGLNLFY…PAKKQTEDYI (242 aa). An ATP-binding site is contributed by 63-70; the sequence is GPSGCGKS.

The protein belongs to the ABC transporter superfamily. Phosphate importer (TC 3.A.1.7) family. In terms of assembly, the complex is composed of two ATP-binding proteins (PstB), two transmembrane proteins (PstC and PstA) (Potential). PstS is missing in this species.

The protein resides in the cell inner membrane. The enzyme catalyses phosphate(out) + ATP + H2O = ADP + 2 phosphate(in) + H(+). Its function is as follows. Part of the ABC transporter complex PstSACB involved in phosphate import. Responsible for energy coupling to the transport system. The protein is Phosphate import ATP-binding protein PstB of Pseudomonas aeruginosa (strain ATCC 15692 / DSM 22644 / CIP 104116 / JCM 14847 / LMG 12228 / 1C / PRS 101 / PAO1).